The following is a 59-amino-acid chain: MSGCGFLLLALLLLVTVEATKMEKKNFGILFYFTRPRNNFVRIGRRDMQSPLLSERLRF.

The first 19 residues, 1–19 (MSGCGFLLLALLLLVTVEA), serve as a signal peptide directing secretion. A propeptide spanning residues 20-25 (TKMEKK) is cleaved from the precursor. At Ile43 the chain carries Isoleucine amide. Positions 45–59 (RRDMQSPLLSERLRF) are excised as a propeptide.

The protein belongs to the FARP (FMRFamide related peptide) family. As to expression, expressed by the venom duct.

It is found in the secreted. Its function is as follows. Neurotoxin that is active on vertebrates. When tested at high doses (10 uM), the toxin affects all zebrafish and mouse DRG neurons in culture, which could be an indication of an effect on a widely expressed receptor or ion channel found in both species. At low doses (1 uM), the effects of the toxin are confined to a specific subpopulation of zebrafish and mouse DRG neurons. In vivo, it induces long-lasting dramatic alterations in the locomotor behavior of zebrafish larvae. It rapidly induces hypoactivity and death of larvae at high doses and it causes hyperactivity at lower doses. In zebrafish adults, intramuscular injection causes the decrease of the movements and visited spaces. In mice, intracranial injection causes lethargy and prolonges sleeping phases and reduced movement. The protein is Conorfamide-Ep1 of Conus episcopatus (Bishop's cone).